The primary structure comprises 401 residues: Argininosuccinate synthase (401 aa).

ATP contacts are provided by residues 7 to 15 and alanine 34; that span reads AYSGGLDTS. Residues tyrosine 85 and serine 90 each coordinate L-citrulline. Glycine 115 provides a ligand contact to ATP. L-aspartate-binding residues include threonine 117, asparagine 121, and aspartate 122. Residue asparagine 121 participates in L-citrulline binding. 5 residues coordinate L-citrulline: arginine 125, serine 174, serine 183, glutamate 259, and tyrosine 271.

The protein belongs to the argininosuccinate synthase family. Type 1 subfamily. Homotetramer.

Its subcellular location is the cytoplasm. The enzyme catalyses L-citrulline + L-aspartate + ATP = 2-(N(omega)-L-arginino)succinate + AMP + diphosphate + H(+). It participates in amino-acid biosynthesis; L-arginine biosynthesis; L-arginine from L-ornithine and carbamoyl phosphate: step 2/3. In Pelotomaculum thermopropionicum (strain DSM 13744 / JCM 10971 / SI), this protein is Argininosuccinate synthase.